The primary structure comprises 337 residues: MHTGTTLTQFIIEEQRRTAGATGDFTSLLNDVVTACKAISNAVNKGALLGVMGALESENVQGETQKKLDVITNDIMIRSNEWAGHLAGMASEEMDDVYAIPGQYPLGKYLLVFDPLDGSSNVDVNISVGTIFSILKAPVAGRAAKAEDFLQAGTKQVCAGYAIYGSSTMLVLTFGHGTNGFTLDRDVGEFVLTHPAMKIPTETKEFAINASNMRFWEKPVQRYVDECLAGKTGPRGKDFNMRWVASMVAEVHRILTRGGIFMYPKDTKDPSKAGKLRLMYEANPMAFIVEQAGGAATTGYQRILDIAPEGLHQRVPVILGSKTEVDTVTGYHHEKAA.

Residues Glu-92, Asp-114, Leu-116, and Asp-117 each coordinate Mg(2+). Residues 117 to 120, Asn-209, and Lys-275 contribute to the substrate site; that span reads DGSS. A Mg(2+)-binding site is contributed by Glu-281.

Belongs to the FBPase class 1 family. As to quaternary structure, homotetramer. The cofactor is Mg(2+).

It is found in the cytoplasm. It catalyses the reaction beta-D-fructose 1,6-bisphosphate + H2O = beta-D-fructose 6-phosphate + phosphate. It functions in the pathway carbohydrate biosynthesis; gluconeogenesis. The sequence is that of Fructose-1,6-bisphosphatase class 1 from Thiobacillus denitrificans (strain ATCC 25259 / T1).